We begin with the raw amino-acid sequence, 209 residues long: Uracil phosphoribosyltransferase (209 aa).

Residues arginine 79, arginine 104, and 131–139 each bind 5-phospho-alpha-D-ribose 1-diphosphate; that span reads DPMLATGGS. Residues isoleucine 194 and 199-201 each bind uracil; that span reads GDA. Aspartate 200 lines the 5-phospho-alpha-D-ribose 1-diphosphate pocket.

It belongs to the UPRTase family. Mg(2+) is required as a cofactor.

It catalyses the reaction UMP + diphosphate = 5-phospho-alpha-D-ribose 1-diphosphate + uracil. Its pathway is pyrimidine metabolism; UMP biosynthesis via salvage pathway; UMP from uracil: step 1/1. Allosterically activated by GTP. Functionally, catalyzes the conversion of uracil and 5-phospho-alpha-D-ribose 1-diphosphate (PRPP) to UMP and diphosphate. The sequence is that of Uracil phosphoribosyltransferase from Desulfitobacterium hafniense (strain DSM 10664 / DCB-2).